We begin with the raw amino-acid sequence, 812 residues long: DNA translocase FtsK 1 (812 aa).

Residues M1–K11 show a composition bias toward basic residues. The segment at M1–V36 is disordered. Positions K25–V36 are enriched in basic and acidic residues. The next 5 helical transmembrane spans lie at I63–I83, V116–L136, I156–L176, L184–L204, and L210–L230. The Cytoplasmic portion of the chain corresponds to E231–L812. In terms of domain architecture, FtsK spans G461–R670. G481–V486 contacts ATP.

Belongs to the FtsK/SpoIIIE/SftA family. In terms of assembly, homohexamer. Forms a ring that surrounds DNA.

It localises to the cell inner membrane. In terms of biological role, essential cell division protein that coordinates cell division and chromosome segregation. The N-terminus is involved in assembly of the cell-division machinery. The C-terminus functions as a DNA motor that moves dsDNA in an ATP-dependent manner towards the dif recombination site, which is located within the replication terminus region. Translocation stops specifically at Xer-dif sites, where FtsK interacts with the Xer recombinase, allowing activation of chromosome unlinking by recombination. FtsK orienting polar sequences (KOPS) guide the direction of DNA translocation. FtsK can remove proteins from DNA as it translocates, but translocation stops specifically at XerCD-dif site, thereby preventing removal of XerC and XerD from dif. The polypeptide is DNA translocase FtsK 1 (ftsK1) (Neisseria meningitidis serogroup A / serotype 4A (strain DSM 15465 / Z2491)).